Here is a 703-residue protein sequence, read N- to C-terminus: Meiotic coiled-coil protein 2 (703 aa).

2 stretches are compositionally biased toward polar residues: residues 1 to 19 (MQSIDLRLPSTSANHSISE) and 245 to 258 (TNVRYSNSKPSTPL). Disordered regions lie at residues 1-29 (MQSIDLRLPSTSANHSISESLEHSKSELN), 245-265 (TNVRYSNSKPSTPLSPEDVDL), and 284-309 (ASTNNLSTNTSGTLKPYSLSSSRSSS). Positions 331-686 (NPSVIPESTS…KVAYLVEKWN (356 aa)) constitute a PUM-HD domain. Pumilio repeat units follow at residues 361 to 396 (NVIIDKIIVSNDQQSSIFLQQKLKISSYDMKQNIVD), 397 to 432 (SIISQIHPLMLNRFGNFLVQRCFEHGTAPQIRQMGS), 433 to 468 (AMLGNMLKLATDPFGCHVVQKAIDNVTEDIKLAMMD), 469 to 504 (ELFLTIDVTIMHHYACHVWQKLFETQWYEYPVNVMN), 509 to 544 (ALRGKWHEVAVGENGSLVVQNMFENCVEKDKRECIE), 545 to 580 (EIIFHLDGIARGQWGNWVVQHMVENGQGEDLKRVID), 581 to 616 (ALLNRAVEFSIDQFASKVIEKAIKSGPKNFISLYLK), and 625 to 660 (RTRQPLIDIASDQYGNYLIQQIIQLGQPAEKNLVIT).

The sequence is that of Meiotic coiled-coil protein 2 (mcp2) from Schizosaccharomyces pombe (strain 972 / ATCC 24843) (Fission yeast).